The following is a 224-amino-acid chain: MERPYVIIVSEVSVDGKLTLYRGASSKELMSLMDEEAYKYLHEIRAKVDGIMVGCETVRTDNPSLTVRYAKGKNPVRIIPCSTANVPLDANVLNTKEAPTIIATTERAPKERLEKIKELGAEVIVVGDELVDFDKLLPELYRRGIKSLMVEGGASINWEFVRRRVVDEIRLIHLPVIVGGENVPTLVGGEGFKKLKNLLHLRLRSHFVRGKQLITEWEVVNKIR.

NADP(+) is bound by residues Thr-57, Asp-61, 82–85 (STAN), Val-131, and 153–156 (GASI).

This sequence belongs to the HTP reductase family. In terms of assembly, homodimer.

It catalyses the reaction 2,5-diamino-6-(1-D-ribitylamino)pyrimidin-4(3H)-one 5'-phosphate + NADP(+) = 2,5-diamino-6-(1-D-ribosylamino)pyrimidin-4(3H)-one 5'-phosphate + NADPH + H(+). The catalysed reaction is 2,5-diamino-6-(1-D-ribitylamino)pyrimidin-4(3H)-one 5'-phosphate + NAD(+) = 2,5-diamino-6-(1-D-ribosylamino)pyrimidin-4(3H)-one 5'-phosphate + NADH + H(+). Its pathway is cofactor biosynthesis; riboflavin biosynthesis. Catalyzes an early step in riboflavin biosynthesis, the NADPH-dependent reduction of the ribose side chain of 2,5-diamino-6-ribosylamino-4(3H)-pyrimidinone 5'-phosphate, yielding 2,5-diamino-6-ribitylamino-4(3H)-pyrimidinone 5'-phosphate. The polypeptide is 2,5-diamino-6-ribosylamino-4(3H)-pyrimidinone 5'-phosphate reductase (ribD2) (Aquifex aeolicus (strain VF5)).